We begin with the raw amino-acid sequence, 98 residues long: Small ribosomal subunit protein bS6 (98 aa).

The protein belongs to the bacterial ribosomal protein bS6 family.

Its function is as follows. Binds together with bS18 to 16S ribosomal RNA. The chain is Small ribosomal subunit protein bS6 from Lactobacillus acidophilus (strain ATCC 700396 / NCK56 / N2 / NCFM).